The chain runs to 320 residues: Stress-induced-phosphoprotein 1 (320 aa).

6 TPR repeats span residues 5–38, 40–72, 80–113, 140–173, 175–207, and 208–241; these read AIAE…DPSN, TFYN…GRET, AKAM…FRDP, AQEE…DPEN, ILYS…DSKF, and IKGY…DPSN. The interval 241 to 269 is disordered; sequence NEEAREGVRNCLRSNDEDPEKAKERSLAD. The segment covering 242 to 269 has biased composition (basic and acidic residues); the sequence is EEAREGVRNCLRSNDEDPEKAKERSLAD. The STI1 domain occupies 269-308; that stretch reads DPEVQEILRDPGMRMILEQMSNDPGAVREHLKNPEIFQKL.

Forms a complex with hsp-1/hsp70 and daf-21/hsp90. Interacts with daf-21/hsp90 (via the C-terminal MEEVD pentapeptide). In terms of tissue distribution, expressed ubiquitously in the whole body. Detected predominantly in the pharyngeal muscles, vulva epithelial cells, striated body-wall muscles, spermathecae and intestinal cell ring. Also observed in the tail regions of hermaphrodite and in the sensory rays and spicules of males.

It localises to the cytoplasm. Its function is as follows. Plays a role in gonad development. Up-regulates longevity and thermotolerance. Binds daf-21/hsp90 and inhibits its ATPase activity. The sequence is that of Stress-induced-phosphoprotein 1 from Caenorhabditis elegans.